The sequence spans 73 residues: UPF0337 protein lp_1708 (73 aa).

Composition is skewed to basic and acidic residues over residues 1–35 (MSDV…REAQ) and 44–73 (KAKD…KSDD). Residues 1 to 73 (MSDVNKKFDS…KDKMKKKSDD (73 aa)) are disordered.

Belongs to the UPF0337 (CsbD) family.

The sequence is that of UPF0337 protein lp_1708 from Lactiplantibacillus plantarum (strain ATCC BAA-793 / NCIMB 8826 / WCFS1) (Lactobacillus plantarum).